A 413-amino-acid polypeptide reads, in one-letter code: Multifunctional CCA protein (413 aa).

2 residues coordinate ATP: G8 and R11. G8 and R11 together coordinate CTP. The Mg(2+) site is built by D21 and D23. The ATP site is built by R91, R137, and R140. Residues R91, R137, and R140 each contribute to the CTP site. One can recognise an HD domain in the interval 228 to 329; it reads TGIHTLMVLA…IKIFDKADLW (102 aa).

The protein belongs to the tRNA nucleotidyltransferase/poly(A) polymerase family. Bacterial CCA-adding enzyme type 1 subfamily. As to quaternary structure, monomer. Can also form homodimers and oligomers. The cofactor is Mg(2+). Requires Ni(2+) as cofactor.

The enzyme catalyses a tRNA precursor + 2 CTP + ATP = a tRNA with a 3' CCA end + 3 diphosphate. The catalysed reaction is a tRNA with a 3' CCA end + 2 CTP + ATP = a tRNA with a 3' CCACCA end + 3 diphosphate. Its function is as follows. Catalyzes the addition and repair of the essential 3'-terminal CCA sequence in tRNAs without using a nucleic acid template. Adds these three nucleotides in the order of C, C, and A to the tRNA nucleotide-73, using CTP and ATP as substrates and producing inorganic pyrophosphate. tRNA 3'-terminal CCA addition is required both for tRNA processing and repair. Also involved in tRNA surveillance by mediating tandem CCA addition to generate a CCACCA at the 3' terminus of unstable tRNAs. While stable tRNAs receive only 3'-terminal CCA, unstable tRNAs are marked with CCACCA and rapidly degraded. This is Multifunctional CCA protein from Shewanella woodyi (strain ATCC 51908 / MS32).